The following is a 200-amino-acid chain: MAFELPNLPYDYDALAPYMSRETLEYHHDKHHLAYVTNGNKLAEEAGLSDLSLEDIVKKSYGTNQPLFNNAGQHYNHVHFWKWMKKGGGGTSLPGKLDAAIKSDLGGYDKFRADFSAAGAGQFGSGWAWLSVKNGKLEISKTPNGENPLVHGATPILGVDVWEHSYYIDYRNARPKYLEAFVDNLINWDYVLELYEAAAK.

4 residues coordinate Mn(2+): His27, His77, Asp160, and His164.

Belongs to the iron/manganese superoxide dismutase family. As to quaternary structure, homodimer. It depends on Mn(2+) as a cofactor.

It carries out the reaction 2 superoxide + 2 H(+) = H2O2 + O2. In terms of biological role, destroys superoxide anion radicals which are normally produced within the cells and which are toxic to biological systems. This is Superoxide dismutase [Mn] (sodB) from Rhizobium meliloti (strain 1021) (Ensifer meliloti).